The primary structure comprises 422 residues: MEIPSTSSEMTYFSVKCAICYKAGHGQHFGVETCRACAAFFRRTVVLNRKYKCTRKSGKCKIGSDETKDVMCKFCRFKKCIDLGMTTENVRTDQVINLNVEPSTSQSLVRLEMTSLQPETDDSNRVQYQIIHPRTRGPAILIDVNAIIKRSKTILETHFFPDDDVIVELNPLEKMTFCLRKLRSKQSWNPNFFTKINFLDLFEFWESQMEDTATWLMYSGEFRKLPNHEKIAIFKIVWAVWRRLERYTMTAQVFGQKCYDEQILLHSHQDAARFTDYDVDYSYITDQGFEKINGLFGGKMIQYFDIIVKPYLELELSDTEIAYILCQIVWNYAGRRLQGQTQAAGERFLEVISNNLHKYYEDKSGNRKRAEDKQNYVARLAKMMQIVNQMLNAQLKMENTMDVAMLFNTFNIVFTEPEFFRV.

The nuclear receptor DNA-binding region spans 14 to 92; that stretch reads SVKCAICYKA…LGMTTENVRT (79 aa). 2 NR C4-type zinc fingers span residues 17 to 37 and 53 to 80; these read CAIC…CRAC and CTRK…FKKC. Positions 161–422 constitute an NR LBD domain; sequence PDDDVIVELN…VFTEPEFFRV (262 aa).

It belongs to the nuclear hormone receptor family.

The protein localises to the nucleus. In terms of biological role, orphan nuclear receptor. The polypeptide is Nuclear hormone receptor family member nhr-54 (nhr-54) (Caenorhabditis elegans).